The following is a 224-amino-acid chain: MTDRDPIHDPAAMREHYRLEGLDETELAAHPMDQFTRWFAQAAQAAAQGVVYEPNAMVVSTADADGRPSSRTVLMKQYDEQGFVFYTNYDSRKARDLAANPYVSLLFPWHPMARQVVVTGLARRTGRDETAAYFRTRPHGSQLGAWASAQSSVIFSRAELDAAYEQLGVRYPEGEQVPVPPNWGGFRIAPQTVEFWQGRWNRLHDRLRYVAEPDGSWRVERLSP.

Substrate contacts are provided by residues 14–17 (REHY) and lysine 76. FMN is bound by residues 71 to 76 (RTVLMK), 86 to 87 (YT), arginine 92, lysine 93, and glutamine 115. Substrate-binding residues include tyrosine 133, arginine 137, and serine 141. Residues 150-151 (QS) and tryptophan 196 each bind FMN. 202–204 (RLH) serves as a coordination point for substrate. Arginine 206 serves as a coordination point for FMN.

Belongs to the pyridoxamine 5'-phosphate oxidase family. As to quaternary structure, homodimer. FMN serves as cofactor.

It carries out the reaction pyridoxamine 5'-phosphate + O2 + H2O = pyridoxal 5'-phosphate + H2O2 + NH4(+). The enzyme catalyses pyridoxine 5'-phosphate + O2 = pyridoxal 5'-phosphate + H2O2. It participates in cofactor metabolism; pyridoxal 5'-phosphate salvage; pyridoxal 5'-phosphate from pyridoxamine 5'-phosphate: step 1/1. Its pathway is cofactor metabolism; pyridoxal 5'-phosphate salvage; pyridoxal 5'-phosphate from pyridoxine 5'-phosphate: step 1/1. Catalyzes the oxidation of either pyridoxine 5'-phosphate (PNP) or pyridoxamine 5'-phosphate (PMP) into pyridoxal 5'-phosphate (PLP). The chain is Pyridoxine/pyridoxamine 5'-phosphate oxidase from Streptomyces avermitilis (strain ATCC 31267 / DSM 46492 / JCM 5070 / NBRC 14893 / NCIMB 12804 / NRRL 8165 / MA-4680).